Reading from the N-terminus, the 663-residue chain is Rho GTPase-activating protein 18 (663 aa).

Disordered regions lie at residues 14–73 (AYHP…DESM) and 85–106 (RSNENRQEGQEAIVVKEPDEGE). The span at 27-37 (SHVKGGDEATS) shows a compositional bias: basic and acidic residues. Polar residues predominate over residues 38 to 51 (SRRYGQYTINQEGS). A phosphoserine mark is found at Ser-65 and Ser-68. Residues 85-102 (RSNENRQEGQEAIVVKEP) are compositionally biased toward basic and acidic residues. Thr-156 carries the phosphothreonine modification. Disordered regions lie at residues 173–228 (FAQQ…PASE) and 245–277 (KEFSKERTQKISSNDSLPSFRLPKDKTGTTRIG). Basic and acidic residues-rich tracts occupy residues 178–205 (EAQEKPPDDSDLRSVRTNENKGQGKDDQ) and 212–222 (DSKEQISRVPE). 2 positions are modified to phosphoserine: Ser-260 and Ser-263. A Rho-GAP domain is found at 324–523 (IPLTILLEQD…LLIRYQKILW (200 aa)). Ser-610 carries the phosphoserine modification.

In terms of assembly, interacts with MPHOSPH6. In terms of tissue distribution, widely expressed: expressed in most organs, except small intestine.

It is found in the cytoplasm. Its function is as follows. Rho GTPase activating protein that suppresses F-actin polymerization by inhibiting Rho. Rho GTPase activating proteins act by converting Rho-type GTPases to an inactive GDP-bound state. Plays a key role in tissue tension and 3D tissue shape by regulating cortical actomyosin network formation. Acts downstream of YAP1 and inhibits actin polymerization, which in turn reduces nuclear localization of YAP1. Regulates cell shape, spreading, and migration. The sequence is that of Rho GTPase-activating protein 18 from Mus musculus (Mouse).